The chain runs to 413 residues: Transposon Ty4-H Gag polyprotein (413 aa).

Residues 39 to 115 (RKVSIKDEQV…IQLLETNENN (77 aa)) adopt a coiled-coil conformation. Residues 380-413 (RQQQLKSSAKRTKVLEQDTKKVKQSVQQQKTGNY) form a disordered region. Residues 403-413 (QSVQQQKTGNY) show a composition bias toward low complexity.

Capsid protein (CA) is the structural component of the virus-like particle (VLP), forming the shell that encapsulates the retrotransposons dimeric RNA genome. The chain is Transposon Ty4-H Gag polyprotein (TY4A-H) from Saccharomyces cerevisiae (strain ATCC 204508 / S288c) (Baker's yeast).